We begin with the raw amino-acid sequence, 181 residues long: Glucose-1-phosphate adenylyltransferase large subunit 2 (181 aa).

Belongs to the bacterial/plant glucose-1-phosphate adenylyltransferase family. In terms of assembly, heterotetramer. Leaves.

Its subcellular location is the plastid. The protein localises to the chloroplast. It is found in the amyloplast. It carries out the reaction alpha-D-glucose 1-phosphate + ATP + H(+) = ADP-alpha-D-glucose + diphosphate. It participates in glycan biosynthesis; starch biosynthesis. With respect to regulation, highly active without 3'phosphoglycerate, and is only slightly affected by the activator 3'phosphoglycerate and inhibitor orthophosphate. Its function is as follows. This protein plays a role in synthesis of starch. It catalyzes the synthesis of the activated glycosyl donor, ADP-glucose from Glc-1-P and ATP. The chain is Glucose-1-phosphate adenylyltransferase large subunit 2 from Hordeum vulgare (Barley).